The primary structure comprises 143 residues: ATP synthase subunit 9, mitochondrial (143 aa).

A mitochondrion-targeting transit peptide spans 1–62 (MAASRVFAQR…ARQAFAARRQ (62 aa)). A run of 2 helical transmembrane segments spans residues 85–105 (IGLG…LLAV) and 119–139 (AILG…VAMM).

Belongs to the ATPase C chain family. In terms of assembly, F-type ATPases have 2 components, CF(1) - the catalytic core - and CF(0) - the membrane proton channel. CF(1) has five subunits: alpha(3), beta(3), gamma(1), delta(1), epsilon(1). CF(0) has three main subunits: a, b and c.

It is found in the mitochondrion membrane. Functionally, mitochondrial membrane ATP synthase (F(1)F(0) ATP synthase or Complex V) produces ATP from ADP in the presence of a proton gradient across the membrane which is generated by electron transport complexes of the respiratory chain. F-type ATPases consist of two structural domains, F(1) - containing the extramembraneous catalytic core and F(0) - containing the membrane proton channel, linked together by a central stalk and a peripheral stalk. During catalysis, ATP synthesis in the catalytic domain of F(1) is coupled via a rotary mechanism of the central stalk subunits to proton translocation. Part of the complex F(0) domain. A homomeric c-ring of probably 10 subunits is part of the complex rotary element. The protein is ATP synthase subunit 9, mitochondrial (atp9) of Emericella nidulans (strain FGSC A4 / ATCC 38163 / CBS 112.46 / NRRL 194 / M139) (Aspergillus nidulans).